A 304-amino-acid polypeptide reads, in one-letter code: Sulfate adenylyltransferase subunit 2 2 (304 aa).

Belongs to the PAPS reductase family. CysD subfamily. As to quaternary structure, heterodimer composed of CysD, the smaller subunit, and CysN.

The catalysed reaction is sulfate + ATP + H(+) = adenosine 5'-phosphosulfate + diphosphate. The protein operates within sulfur metabolism; hydrogen sulfide biosynthesis; sulfite from sulfate: step 1/3. Its function is as follows. With CysN forms the ATP sulfurylase (ATPS) that catalyzes the adenylation of sulfate producing adenosine 5'-phosphosulfate (APS) and diphosphate, the first enzymatic step in sulfur assimilation pathway. APS synthesis involves the formation of a high-energy phosphoric-sulfuric acid anhydride bond driven by GTP hydrolysis by CysN coupled to ATP hydrolysis by CysD. The protein is Sulfate adenylyltransferase subunit 2 2 of Marinobacter nauticus (strain ATCC 700491 / DSM 11845 / VT8) (Marinobacter aquaeolei).